Here is a 470-residue protein sequence, read N- to C-terminus: Zinc finger protein weckle (470 aa).

The segment at 1-103 (MGVPTSDWIY…DALRLEYGLP (103 aa)) is required for homodimerization. Residues 10 to 82 (YWCRLCARDD…SKVQAIFELL (73 aa)) form the ZAD domain. 4 residues coordinate Zn(2+): cysteine 12, cysteine 15, cysteine 55, and cysteine 58. A disordered region spans residues 156 to 265 (NSDPKVLASP…LSMSPHGSQS (110 aa)). Serine 168 bears the Phosphoserine mark. Residues 195-208 (ESDDEEAILDEDEA) show a composition bias toward acidic residues. The span at 214 to 225 (LKRKRGRPKGSG) shows a compositional bias: basic residues. A compositionally biased stretch (basic and acidic residues) spans 237–254 (TSREPDDNAKSKQDDKTS). The span at 255 to 265 (ELSMSPHGSQS) shows a compositional bias: polar residues. 6 consecutive C2H2-type zinc fingers follow at residues 271-294 (YPCKICNETFMSFMALRRHKHDMH), 300-322 (YVCDHCGKGLKTFTSLVEHQLVH), 328-350 (CICPVCNAGFKNKARLRVHSQTH), 355-377 (FECNVCGKKLQTRAILNKHKYVH), 383-405 (FKCEVCGSGCKNSTALKIHLLGH), and 411-434 (YVCKYCGKAFASNTNCRSHKWKKH).

Homodimer. Interacts with Myd88 and Toll.

The protein localises to the cell membrane. Acts as an adapter to assemble/stabilize a Toll/wek/Myd88/tube complex; required for efficient recruitment of Myd88 to Toll. Dispensable for innate immune response; plays a minimal role, if any, in the immune defense against Gram-positive bacteria and fungi. Involved in dorsoventral axis determination. The polypeptide is Zinc finger protein weckle (Drosophila melanogaster (Fruit fly)).